A 1462-amino-acid polypeptide reads, in one-letter code: Gag-Pro-Pol polyprotein (1462 aa).

Gly2 carries the N-myristoyl glycine; by host lipid modification. The disordered stretch occupies residues 93 to 144 (QIPSRPAPPPPSSPTHDPPDSDPQIPPPYVEPTAPQVLPVMHPHGAPPNHRP). Ser105 carries the phosphoserine; by host MAPK1 modification. The short motif at 118 to 121 (PPPY) is the PPXY motif element. The PTAP/PSAP motif motif lies at 124 to 127 (PTAP). 2 consecutive CCHC-type zinc fingers follow at residues 355-372 (QPCF…DCTQ) and 378-395 (GPCP…DCPR). The Peptidase A2 domain occupies 476–554 (IEALLDTGAD…NNWAIIGRDA (79 aa)). Asp481 functions as the For protease activity; shared with dimeric partner in the catalytic mechanism. One can recognise a Reverse transcriptase domain in the interval 614–804 (LEAGHIEPYT…GTIKFLGQII (191 aa)). Asp680, Asp755, Asp756, Asp1040, Glu1074, Asp1096, Asp1157, Asp1230, and Asp1287 together coordinate Mg(2+). Residues 1031-1165 (INTAPCLFSD…TDALLITPVL (135 aa)) form the RNase H type-1 domain. The 170-residue stretch at 1219–1388 (RGLLPNHIWQ…QPIPETRSLS (170 aa)) folds into the Integrase catalytic domain. The integrase-type DNA-binding region spans 1393–1443 (HWYYFKLPGLNSRQWKGPQEALQEAAGAALIPVSASSAQWIPWRLLKRAAC).

In terms of assembly, homodimer; the homodimers are part of the immature particles. Interacts with human TSG101 and NEDD4; these interactions are essential for budding and release of viral particles. As to quaternary structure, homodimer; further assembles as homohexamers. The cofactor is Mg(2+). In terms of processing, phosphorylation of the matrix protein p19 by MAPK1 seems to play a role in budding. Post-translationally, myristoylated. Myristoylation of the matrix (MA) domain mediates the transport and binding of Gag polyproteins to the host plasma membrane and is required for the assembly of viral particles. Specific enzymatic cleavages by the viral protease yield mature proteins. The polyprotein is cleaved during and after budding, this process is termed maturation. The protease is autoproteolytically processed at its N- and C-termini.

The protein localises to the virion. It catalyses the reaction Endonucleolytic cleavage to 5'-phosphomonoester.. The enzyme catalyses DNA(n) + a 2'-deoxyribonucleoside 5'-triphosphate = DNA(n+1) + diphosphate. In terms of biological role, the matrix domain targets Gag, Gag-Pro and Gag-Pro-Pol polyproteins to the plasma membrane via a multipartite membrane binding signal, that includes its myristoylated N-terminus. Functionally, matrix protein. Forms the spherical core of the virus that encapsulates the genomic RNA-nucleocapsid complex. Its function is as follows. Binds strongly to viral nucleic acids and promote their aggregation. Also destabilizes the nucleic acids duplexes via highly structured zinc-binding motifs. In terms of biological role, the aspartyl protease mediates proteolytic cleavages of Gag and Gag-Pol polyproteins during or shortly after the release of the virion from the plasma membrane. Cleavages take place as an ordered, step-wise cascade to yield mature proteins. This process is called maturation. Displays maximal activity during the budding process just prior to particle release from the cell. Cleaves the translation initiation factor eIF4G leading to the inhibition of host cap-dependent translation. Functionally, RT is a multifunctional enzyme that converts the viral RNA genome into dsDNA in the cytoplasm, shortly after virus entry into the cell. This enzyme displays a DNA polymerase activity that can copy either DNA or RNA templates, and a ribonuclease H (RNase H) activity that cleaves the RNA strand of RNA-DNA heteroduplexes in a partially processive 3' to 5'-endonucleasic mode. Conversion of viral genomic RNA into dsDNA requires many steps. A tRNA-Pro binds to the primer-binding site (PBS) situated at the 5'-end of the viral RNA. RT uses the 3' end of the tRNA primer to perform a short round of RNA-dependent minus-strand DNA synthesis. The reading proceeds through the U5 region and ends after the repeated (R) region which is present at both ends of viral RNA. The portion of the RNA-DNA heteroduplex is digested by the RNase H, resulting in a ssDNA product attached to the tRNA primer. This ssDNA/tRNA hybridizes with the identical R region situated at the 3' end of viral RNA. This template exchange, known as minus-strand DNA strong stop transfer, can be either intra- or intermolecular. RT uses the 3' end of this newly synthesized short ssDNA to perform the RNA-dependent minus-strand DNA synthesis of the whole template. RNase H digests the RNA template except for a polypurine tract (PPT) situated at the 5' end of the genome. It is not clear if both polymerase and RNase H activities are simultaneous. RNase H probably can proceed both in a polymerase-dependent (RNA cut into small fragments by the same RT performing DNA synthesis) and a polymerase-independent mode (cleavage of remaining RNA fragments by free RTs). Secondly, RT performs DNA-directed plus-strand DNA synthesis using the PPT that has not been removed by RNase H as primer. PPT and tRNA primers are then removed by RNase H. The 3' and 5' ssDNA PBS regions hybridize to form a circular dsDNA intermediate. Strand displacement synthesis by RT to the PBS and PPT ends produces a blunt ended, linear dsDNA copy of the viral genome that includes long terminal repeats (LTRs) at both ends. Catalyzes viral DNA integration into the host chromosome, by performing a series of DNA cutting and joining reactions. The polypeptide is Gag-Pro-Pol polyprotein (gag-pro-pol) (Homo sapiens (Human)).